The sequence spans 249 residues: MTEHSRDTPQFYLTAPSPCPYLPGKEERKVFTHLVGERAGALNDVLTQGGFRRSQSIAYRPACEGCRACISVRICVDDFVPSRSFRRTLKENEDLIGALRPPSPTSEQYGLFRSYVTSRHGSGGMADMSVLDYAMMVEDTHVQTRLVEYRRRGPDSRINGRGTGDLFAVALTDILGDGLSMVYSFYNPNIPERSLGTFLILDHIAKAKEMGMPYVYLGYWVNGSRKMDYKRRFLPQERLSPHGWERVDE.

Belongs to the R-transferase family. Bpt subfamily.

The protein localises to the cytoplasm. It catalyses the reaction N-terminal L-glutamyl-[protein] + L-leucyl-tRNA(Leu) = N-terminal L-leucyl-L-glutamyl-[protein] + tRNA(Leu) + H(+). The catalysed reaction is N-terminal L-aspartyl-[protein] + L-leucyl-tRNA(Leu) = N-terminal L-leucyl-L-aspartyl-[protein] + tRNA(Leu) + H(+). Its function is as follows. Functions in the N-end rule pathway of protein degradation where it conjugates Leu from its aminoacyl-tRNA to the N-termini of proteins containing an N-terminal aspartate or glutamate. The chain is Aspartate/glutamate leucyltransferase from Azorhizobium caulinodans (strain ATCC 43989 / DSM 5975 / JCM 20966 / LMG 6465 / NBRC 14845 / NCIMB 13405 / ORS 571).